The chain runs to 144 residues: D-aminoacyl-tRNA deacylase (144 aa).

Residues G137–P138 carry the Gly-cisPro motif, important for rejection of L-amino acids motif.

Belongs to the DTD family. Homodimer.

It is found in the cytoplasm. The catalysed reaction is glycyl-tRNA(Ala) + H2O = tRNA(Ala) + glycine + H(+). It carries out the reaction a D-aminoacyl-tRNA + H2O = a tRNA + a D-alpha-amino acid + H(+). Functionally, an aminoacyl-tRNA editing enzyme that deacylates mischarged D-aminoacyl-tRNAs. Also deacylates mischarged glycyl-tRNA(Ala), protecting cells against glycine mischarging by AlaRS. Acts via tRNA-based rather than protein-based catalysis; rejects L-amino acids rather than detecting D-amino acids in the active site. By recycling D-aminoacyl-tRNA to D-amino acids and free tRNA molecules, this enzyme counteracts the toxicity associated with the formation of D-aminoacyl-tRNA entities in vivo and helps enforce protein L-homochirality. The protein is D-aminoacyl-tRNA deacylase of Acinetobacter baumannii (strain SDF).